The following is a 229-amino-acid chain: DNA repair protein RecO (229 aa).

Belongs to the RecO family.

In terms of biological role, involved in DNA repair and RecF pathway recombination. This Legionella pneumophila (strain Paris) protein is DNA repair protein RecO.